A 369-amino-acid polypeptide reads, in one-letter code: Phosphate acyltransferase (369 aa).

It belongs to the PlsX family. As to quaternary structure, homodimer. Probably interacts with PlsY.

It is found in the cytoplasm. It catalyses the reaction a fatty acyl-[ACP] + phosphate = an acyl phosphate + holo-[ACP]. It functions in the pathway lipid metabolism; phospholipid metabolism. In terms of biological role, catalyzes the reversible formation of acyl-phosphate (acyl-PO(4)) from acyl-[acyl-carrier-protein] (acyl-ACP). This enzyme utilizes acyl-ACP as fatty acyl donor, but not acyl-CoA. In Gluconobacter oxydans (strain 621H) (Gluconobacter suboxydans), this protein is Phosphate acyltransferase.